The primary structure comprises 414 residues: NAC domain-containing protein 35 (414 aa).

Residues 1 to 21 (MAIVSSTTSIIPMSNQVNNNE) show a composition bias toward polar residues. Residues 1–47 (MAIVSSTTSIIPMSNQVNNNEKGIEDNDHRGGQESHVQNEDEADDHD) form a disordered region. Residues 22–47 (KGIEDNDHRGGQESHVQNEDEADDHD) are compositionally biased toward basic and acidic residues. Residues 51-198 (VMPGFRFHPT…EISLCRVYKR (148 aa)) enclose the NAC domain. The DNA-binding element occupies 149–204 (IGLKKTLVFYSGKAPKGTRTSWIMNEYRLPHHETEKYQKAEISLCRVYKRPGVEDH). The segment at 200-251 (GVEDHPSVPRSLSTRHHNHNSSTSSRLALRQQQHHSSSSNHSDNNLNNNNNI) is disordered. Low complexity predominate over residues 233-251 (HHSSSSNHSDNNLNNNNNI).

Expressed in aerial organs in early stages of seedling development.

Its subcellular location is the nucleus. Transcription factor that acts as a floral repressor. Controls flowering time by negatively regulating CONSTANS (CO) expression in a GIGANTEA (GI)-independent manner. Regulates the plant cold response by positive regulation of the cold response genes COR15A and KIN1. May coordinate cold response and flowering time. The chain is NAC domain-containing protein 35 from Arabidopsis thaliana (Mouse-ear cress).